A 203-amino-acid polypeptide reads, in one-letter code: MKIINILFCISLLLLNSCNSNDNDTLKNNAQQTKSRKKRDLSQEELPQQEKITLTSDEEKMFTSLINVFKYTIEKLNNEIQGCMNGNKSKCNDFFDWLSEDIQKQKELAGAFTKVYNFLKSKAQNETFDTYIKGAIDCKKNTPQDCNKNNKYGDGDNLIEQYFRGVANDMSNRNSNEEIYQYLKDELLKEDNHYAGLTANWQN.

An N-terminal signal peptide occupies residues 1 to 17; sequence MKIINILFCISLLLLNS. The N-palmitoyl cysteine moiety is linked to residue cysteine 18. Cysteine 18 carries S-diacylglycerol cysteine lipidation. Residues 26–47 are disordered; that stretch reads LKNNAQQTKSRKKRDLSQEELP.

This sequence belongs to the Multicopy lipoprotein (Mlp) family.

It localises to the cell outer membrane. An outer membrane protein that may participate in pathogenesis. Some human Lyme disease patients have antibodies against this protein. The Mlp proteins probably undergo intragenic recombination, generating new alleles. This is Lipoprotein MlpJ from Borreliella burgdorferi (strain ATCC 35210 / DSM 4680 / CIP 102532 / B31) (Borrelia burgdorferi).